A 358-amino-acid chain; its full sequence is Histidinol-phosphate aminotransferase (358 aa).

At K218 the chain carries N6-(pyridoxal phosphate)lysine.

It belongs to the class-II pyridoxal-phosphate-dependent aminotransferase family. Histidinol-phosphate aminotransferase subfamily. As to quaternary structure, homodimer. Requires pyridoxal 5'-phosphate as cofactor.

The enzyme catalyses L-histidinol phosphate + 2-oxoglutarate = 3-(imidazol-4-yl)-2-oxopropyl phosphate + L-glutamate. The protein operates within amino-acid biosynthesis; L-histidine biosynthesis; L-histidine from 5-phospho-alpha-D-ribose 1-diphosphate: step 7/9. The sequence is that of Histidinol-phosphate aminotransferase from Dehalococcoides mccartyi (strain ATCC BAA-2100 / JCM 16839 / KCTC 5957 / BAV1).